Consider the following 161-residue polypeptide: Protein-export protein SecB (161 aa).

It belongs to the SecB family. Homotetramer, a dimer of dimers. One homotetramer interacts with 1 SecA dimer.

It localises to the cytoplasm. One of the proteins required for the normal export of preproteins out of the cell cytoplasm. It is a molecular chaperone that binds to a subset of precursor proteins, maintaining them in a translocation-competent state. It also specifically binds to its receptor SecA. The sequence is that of Protein-export protein SecB from Afipia carboxidovorans (strain ATCC 49405 / DSM 1227 / KCTC 32145 / OM5) (Oligotropha carboxidovorans).